Here is a 224-residue protein sequence, read N- to C-terminus: PKHD-type hydroxylase tll1907 (224 aa).

The 100-residue stretch at 77–176 folds into the Fe2OG dioxygenase domain; it reads KIIGPLLFSR…RLVAVAWVQS (100 aa). Fe cation-binding residues include His-96, Asp-98, and His-157. Arg-167 contributes to the 2-oxoglutarate binding site.

It depends on Fe(2+) as a cofactor. The cofactor is L-ascorbate.

The protein is PKHD-type hydroxylase tll1907 of Thermosynechococcus vestitus (strain NIES-2133 / IAM M-273 / BP-1).